Reading from the N-terminus, the 329-residue chain is Glycerol-3-phosphate dehydrogenase [NAD(P)+] (329 aa).

Ser-13, Trp-14, His-34, and Lys-105 together coordinate NADPH. Lys-105, Gly-134, and Ser-136 together coordinate sn-glycerol 3-phosphate. Ala-138 contributes to the NADPH binding site. Positions 189, 242, 252, 253, and 254 each coordinate sn-glycerol 3-phosphate. Residue Lys-189 is the Proton acceptor of the active site. Arg-253 lines the NADPH pocket. Positions 277 and 279 each coordinate NADPH.

This sequence belongs to the NAD-dependent glycerol-3-phosphate dehydrogenase family.

It is found in the cytoplasm. The enzyme catalyses sn-glycerol 3-phosphate + NAD(+) = dihydroxyacetone phosphate + NADH + H(+). The catalysed reaction is sn-glycerol 3-phosphate + NADP(+) = dihydroxyacetone phosphate + NADPH + H(+). It participates in membrane lipid metabolism; glycerophospholipid metabolism. Its function is as follows. Catalyzes the reduction of the glycolytic intermediate dihydroxyacetone phosphate (DHAP) to sn-glycerol 3-phosphate (G3P), the key precursor for phospholipid synthesis. The protein is Glycerol-3-phosphate dehydrogenase [NAD(P)+] of Legionella pneumophila subsp. pneumophila (strain Philadelphia 1 / ATCC 33152 / DSM 7513).